The primary structure comprises 408 residues: MLLNEIIDLIPNINKCLKKGKTLIIRIDINSPIVNGKIIDDFRIRAHSYTLRLASDAGARAVVLAHQGRPGQDDFTSLEIHKPYIEKYLERPIKFVDDIIGPEARRQIKELKDGEILLLENVRILSEEVIEKVPEAQAETLLVRKLAPLADYYVFDGFAVAHRSQPSVVGFPIVLPSCAGPVFERELRALGAVFEKRGRGVTLIAGGAKMPDTLKAVEQLLKNGFVEKVAVGGLVGFVFALGKYGVLNSALKQEVEKGGFLPYIERARQLLAKYGAQIYTPVDFAVNQNGRLDVDIYSLAQPPLDIGRSTTIAFKEVIEQSEIVIFSGPMGYIEDERFATGTIELLKAASNRRLILGGGHTIMAAEKAGVLDKAYHVSTGGRAFIQTIGGEEMPAVKALLTSAKKFSL.

Residues 28-30 (DIN), R43, 66-69 (HQGR), R123, and R163 each bind substrate. ATP is bound by residues E334 and 358 to 361 (GGHT).

It belongs to the phosphoglycerate kinase family. Monomer.

The protein resides in the cytoplasm. It catalyses the reaction (2R)-3-phosphoglycerate + ATP = (2R)-3-phospho-glyceroyl phosphate + ADP. Its pathway is carbohydrate degradation; glycolysis; pyruvate from D-glyceraldehyde 3-phosphate: step 2/5. The sequence is that of Phosphoglycerate kinase from Pyrobaculum aerophilum (strain ATCC 51768 / DSM 7523 / JCM 9630 / CIP 104966 / NBRC 100827 / IM2).